The primary structure comprises 157 residues: MQDILNIYLSSEESGGLFDFDATLPLMASQFLLIMLILDITFYKPINKVLKDRENYILKTLESATQISEKTKETLARYEEVILKSKKESQQLIDSIKTKTEHDIVNELIQTQNSTREFISKSIKELYRKKEQTLKVLEEDTENLSDKIYLKLINPKQ.

The chain crosses the membrane as a helical span at residues 26–43; that stretch reads LMASQFLLIMLILDITFY.

This sequence belongs to the ATPase B chain family. F-type ATPases have 2 components, F(1) - the catalytic core - and F(0) - the membrane proton channel. F(1) has five subunits: alpha(3), beta(3), gamma(1), delta(1), epsilon(1). F(0) has four main subunits: a(1), b(1), b'(1) and c(10-14). The alpha and beta chains form an alternating ring which encloses part of the gamma chain. F(1) is attached to F(0) by a central stalk formed by the gamma and epsilon chains, while a peripheral stalk is formed by the delta, b and b' chains.

It localises to the plastid. Its subcellular location is the chloroplast thylakoid membrane. F(1)F(0) ATP synthase produces ATP from ADP in the presence of a proton or sodium gradient. F-type ATPases consist of two structural domains, F(1) containing the extramembraneous catalytic core and F(0) containing the membrane proton channel, linked together by a central stalk and a peripheral stalk. During catalysis, ATP synthesis in the catalytic domain of F(1) is coupled via a rotary mechanism of the central stalk subunits to proton translocation. Functionally, component of the F(0) channel, it forms part of the peripheral stalk, linking F(1) to F(0). The b'-subunit is a diverged and duplicated form of b found in plants and photosynthetic bacteria. This is ATP synthase subunit b', chloroplastic from Cyanidium caldarium (Red alga).